The following is a 1212-amino-acid chain: Dermatan-sulfate epimerase-like protein (1212 aa).

A signal peptide spans 1 to 20 (MALMFTGHLLFLALLMFAFS). Residues asparagine 28, asparagine 666, asparagine 688, and asparagine 709 are each glycosylated (N-linked (GlcNAc...) asparagine). Helical transmembrane passes span 764–784 (IIFPFGFKFNIAVGLILCISL) and 803–823 (WILILVIALWFIELLDVWSTC). N-linked (GlcNAc...) asparagine glycosylation is present at asparagine 874.

Belongs to the dermatan-sulfate isomerase family. In terms of tissue distribution, expressed in different brain areas as well as in multiple other peripheral tissues.

Its subcellular location is the membrane. In Homo sapiens (Human), this protein is Dermatan-sulfate epimerase-like protein (DSEL).